A 515-amino-acid chain; its full sequence is Bifunctional purine biosynthesis protein PurH (515 aa).

The MGS-like domain maps to 1-145; the sequence is MTKRALISVS…KNHASVTVVV (145 aa).

The protein belongs to the PurH family.

The catalysed reaction is (6R)-10-formyltetrahydrofolate + 5-amino-1-(5-phospho-beta-D-ribosyl)imidazole-4-carboxamide = 5-formamido-1-(5-phospho-D-ribosyl)imidazole-4-carboxamide + (6S)-5,6,7,8-tetrahydrofolate. It carries out the reaction IMP + H2O = 5-formamido-1-(5-phospho-D-ribosyl)imidazole-4-carboxamide. Its pathway is purine metabolism; IMP biosynthesis via de novo pathway; 5-formamido-1-(5-phospho-D-ribosyl)imidazole-4-carboxamide from 5-amino-1-(5-phospho-D-ribosyl)imidazole-4-carboxamide (10-formyl THF route): step 1/1. The protein operates within purine metabolism; IMP biosynthesis via de novo pathway; IMP from 5-formamido-1-(5-phospho-D-ribosyl)imidazole-4-carboxamide: step 1/1. The polypeptide is Bifunctional purine biosynthesis protein PurH (Streptococcus agalactiae serotype Ia (strain ATCC 27591 / A909 / CDC SS700)).